A 172-amino-acid polypeptide reads, in one-letter code: RNA pyrophosphohydrolase (172 aa).

Residues 6–149 enclose the Nudix hydrolase domain; sequence GYRLNVGIVI…KRDVYRRAMK (144 aa). The Nudix box motif lies at 38–59; the sequence is GGIDDGESPEQAMFRELYEEVG.

This sequence belongs to the Nudix hydrolase family. RppH subfamily. It depends on a divalent metal cation as a cofactor.

Functionally, accelerates the degradation of transcripts by removing pyrophosphate from the 5'-end of triphosphorylated RNA, leading to a more labile monophosphorylated state that can stimulate subsequent ribonuclease cleavage. This is RNA pyrophosphohydrolase from Vibrio cholerae serotype O1 (strain ATCC 39315 / El Tor Inaba N16961).